Reading from the N-terminus, the 485-residue chain is Glutamyl-tRNA(Gln) amidotransferase subunit A (485 aa).

Active-site charge relay system residues include K78 and S153. The active-site Acyl-ester intermediate is the S177.

The protein belongs to the amidase family. GatA subfamily. As to quaternary structure, heterotrimer of A, B and C subunits.

It carries out the reaction L-glutamyl-tRNA(Gln) + L-glutamine + ATP + H2O = L-glutaminyl-tRNA(Gln) + L-glutamate + ADP + phosphate + H(+). Functionally, allows the formation of correctly charged Gln-tRNA(Gln) through the transamidation of misacylated Glu-tRNA(Gln) in organisms which lack glutaminyl-tRNA synthetase. The reaction takes place in the presence of glutamine and ATP through an activated gamma-phospho-Glu-tRNA(Gln). In Geobacter sulfurreducens (strain ATCC 51573 / DSM 12127 / PCA), this protein is Glutamyl-tRNA(Gln) amidotransferase subunit A.